Here is a 615-residue protein sequence, read N- to C-terminus: Sodium-coupled neutral amino acid transporter 9 homolog (615 aa).

Topologically, residues 1–165 (MPPFFAEFTE…LKDVSGKQGS (165 aa)) are cytoplasmic. Positions 41–65 (VDDNDTDPLLDDEPPRRLPPAGGVP) are disordered. A compositionally biased stretch (acidic residues) spans 42–52 (DDNDTDPLLDD). A helical membrane pass occupies residues 166 to 186 (IVTIFSIWNTMMGTSLLAMPW). The important for arginine binding and amino acid transport stretch occupies residues 175 to 180 (TMMGTS). Topologically, residues 187-192 (ALQQAG) are lumenal. Residues 193-213 (LVLGIIIMLSMAAICFYTAYI) traverse the membrane as a helical segment. Residues 214–246 (VIESPKRLQDLSVDPLLAEFSDVCKSLFGRIGE) are Cytoplasmic-facing. The chain crosses the membrane as a helical span at residues 247–273 (YCAVVFSVCVLIGGVIVYWVLMSNFLY). Residues 274 to 341 (YTGAVVYESM…TGDDSWSFDK (68 aa)) lie on the Lumenal side of the membrane. N286 and N295 each carry an N-linked (GlcNAc...) asparagine glycan. Cysteines 304 and 478 form a disulfide. Residues 342–358 (FWTLRGTVPIYLAFALF) traverse the membrane as a helical segment. At 359–367 (PLMNFKSPT) the chain is on the cytoplasmic side. A helical membrane pass occupies residues 368–392 (FFTKFNVLGTISVMYLLMFVFSKLL). The Lumenal segment spans residues 393 to 413 (ECGVNMDFSNPKSIHYVQLAN). The helical transmembrane segment at 414–434 (MHFPALSGTLTLSYFIHNAVL) threads the bilayer. Residues 435–451 (TILRNQKHPENNARDLS) are Cytoplasmic-facing. Residues 452-472 (IGYCLVAFCYVFIGFTFFAAF) form a helical membrane-spanning segment. At 473 to 491 (PVQRSCISDNFLNNFGAGD) the chain is on the lumenal side. A helical transmembrane segment spans residues 492–512 (VLSSTARLFLLFQMITVLPLL). Over 513 to 533 (MFLVRSQLFYAIFGQTWPGAI) the chain is Cytoplasmic. A helical membrane pass occupies residues 534–554 (RVIILNVLLIAVAVGFATFYP). At 555–561 (NVGSILR) the chain is on the lumenal side. The chain crosses the membrane as a helical span at residues 562–582 (YVGSISGLVYVFALPAMVYIK). Residues 583 to 594 (QSEAAGTLTPMK) lie on the Cytoplasmic side of the membrane. Residues 595 to 615 (KYAHYGIIVIGVANLIAQFVI) traverse the membrane as a helical segment.

It belongs to the amino acid/polyamine transporter 2 family. SLC38A9 subfamily.

The protein resides in the lysosome membrane. The protein localises to the late endosome membrane. Its activity is regulated as follows. Amino acid transport is sodium-dependent. Transport of leucine, tyrosine and phenylalanine is increased by arginine binding. Its function is as follows. Lysosomal amino acid transporter involved in the activation of mTORC1 in response to amino acid levels. Probably acts as an amino acid sensor of the Rag GTPases and Ragulator complexes, 2 complexes involved in amino acid sensing and activation of mTORC1, a signaling complex promoting cell growth in response to growth factors, energy levels, and amino acids. This chain is Sodium-coupled neutral amino acid transporter 9 homolog, found in Caenorhabditis elegans.